Reading from the N-terminus, the 325-residue chain is UDP-N-acetylglucosamine transporter ROCK1 (325 aa).

Over 1–13 (MATANGAKSPSSM) the chain is Cytoplasmic. The helical transmembrane segment at 14-34 (GPKVLFYSILLTLQYGAQPLI) threads the bilayer. Topologically, residues 35-42 (SKRCIRKD) are lumenal. A helical membrane pass occupies residues 43 to 63 (VIVTSSVLTCEIVKVICALIL). Residues 64-109 (MARNGSLKGLAKEWTLMGSLTASGLPAAIYALQNSLLQISYRSLDS) are Cytoplasmic-facing. The helical transmembrane segment at 110-130 (LTFSILNQTKIFFTAFFTFII) threads the bilayer. The Lumenal portion of the chain corresponds to 131–135 (LRQKQ). A helical membrane pass occupies residues 136–156 (SILQIGALCLLIMAAVLLSVG). Over 157 to 171 (EGSNKDSSGINADQK) the chain is Cytoplasmic. Residues 172–192 (LFYGIIPVLAASVLSGLASSL) form a helical membrane-spanning segment. The Lumenal portion of the chain corresponds to 193 to 203 (CQWASQVKKHS). The helical transmembrane segment at 204 to 224 (SYLMTVEMSIVGSLCLLVSTL) threads the bilayer. The Cytoplasmic segment spans residues 225-241 (KSPDGEAIKKYGFFHGW). Residues 242 to 262 (TALTLVPVISNALGGILVGLV) traverse the membrane as a helical segment. The Lumenal segment spans residues 263–270 (TSHAGGVR). Residues 271-291 (KGFVIVSALLVTALLQFAFEG) form a helical membrane-spanning segment. Residues 292 to 325 (KPPSSYCLVALPLVMSSISMYQKYPYIDKKKKKV) lie on the Cytoplasmic side of the membrane.

The protein belongs to the nucleotide-sugar transporter family. CMP-Sialate:CMP antiporter (TC 2.A.7.12) subfamily. In terms of tissue distribution, expressed in roots, cotyledons, leaves, stems, flowers and siliques.

The protein resides in the endoplasmic reticulum membrane. Mediates the transport of UDP-linked acetylated hexosamines across the endoplasmic reticulum (ER) membrane. Facilitates UDP-N-acetylglucosamine (UDP-GlcNAc) and UDP-N-acetylgalactosamine (UDP-GalNAc) transport. Regulates the cytokinin signal in meristematic cells through modulating activity of cytokinin oxidases/dehydrogenases. Part of the ER quality control system, which determines the fate of aberrant proteins in the secretory pathway. The chain is UDP-N-acetylglucosamine transporter ROCK1 from Arabidopsis thaliana (Mouse-ear cress).